The primary structure comprises 261 residues: Acyl-[acyl-carrier-protein]--UDP-N-acetylglucosamine O-acyltransferase (261 aa).

Belongs to the transferase hexapeptide repeat family. LpxA subfamily. In terms of assembly, homotrimer.

The protein resides in the cytoplasm. It catalyses the reaction a (3R)-hydroxyacyl-[ACP] + UDP-N-acetyl-alpha-D-glucosamine = a UDP-3-O-[(3R)-3-hydroxyacyl]-N-acetyl-alpha-D-glucosamine + holo-[ACP]. It functions in the pathway glycolipid biosynthesis; lipid IV(A) biosynthesis; lipid IV(A) from (3R)-3-hydroxytetradecanoyl-[acyl-carrier-protein] and UDP-N-acetyl-alpha-D-glucosamine: step 1/6. Its function is as follows. Involved in the biosynthesis of lipid A, a phosphorylated glycolipid that anchors the lipopolysaccharide to the outer membrane of the cell. The polypeptide is Acyl-[acyl-carrier-protein]--UDP-N-acetylglucosamine O-acyltransferase (Sulfurimonas denitrificans (strain ATCC 33889 / DSM 1251) (Thiomicrospira denitrificans (strain ATCC 33889 / DSM 1251))).